The sequence spans 1216 residues: Histone-lysine N-methyltransferase SETDB1-B (1216 aa).

Residues 38–61 (KADLEQLQEWVEQREKEVADIDAL) are a coiled coil. Tudor domains follow at residues 266-329 (RLFV…LKKT) and 356-412 (LLKP…NLKM). The segment at 417 to 513 (SQEKKMAGQQ…QGMPSDLQPK (97 aa)) is disordered. Positions 467-478 (PVAPQPAGPPQP) are enriched in pro residues. Positions 482 to 498 (ESPSFKSQMAKKSTGQL) are enriched in polar residues. The region spanning 595–666 (HRGRNPLLTP…EMFCLDPYVL (72 aa)) is the MBD domain. The Pre-SET domain maps to 728–801 (VGCDCTDGCR…MCTNRLVQHG (74 aa)). The Zn(2+) site is built by C730, C732, C736, C742, C744, C782, C786, C788, and C793. Residues 804–1179 (VRLQLFKTQN…AGTELTWDYN (376 aa)) form the SET domain. Residues 814-816 (KGW), D852, and Y854 each bind S-adenosyl-L-methionine. Disordered stretches follow at residues 892 to 944 (LPAS…DTFV), 961 to 1057 (RRQA…KTQA), and 1081 to 1108 (KSGGGGAGGGGSGPSHGHGGGGGDNGPK). Residues 918 to 940 (DSSEESDDEKDDDSNEDDSDSSD) are compositionally biased toward acidic residues. Basic and acidic residues-rich tracts occupy residues 966 to 976 (GLKEESQDSKD) and 983 to 997 (GEDRKPPHMPEETGK). A compositionally biased stretch (polar residues) spans 1003-1016 (WLTNQSSTSANQSV). Composition is skewed to basic and acidic residues over residues 1020 to 1029 (GGIKTEKKDV) and 1046 to 1055 (DDNKEREKKT). Residues 1082–1105 (SGGGGAGGGGSGPSHGHGGGGGDN) are compositionally biased toward gly residues. S-adenosyl-L-methionine contacts are provided by residues R1133 and 1136 to 1137 (NH). Positions 1139, 1192, 1194, and 1199 each coordinate Zn(2+). In terms of domain architecture, Post-SET spans 1188–1204 (KELLCCCGSTECRGRLL).

This sequence belongs to the class V-like SAM-binding methyltransferase superfamily. Histone-lysine methyltransferase family. Suvar3-9 subfamily.

Its subcellular location is the nucleus. The protein resides in the chromosome. The enzyme catalyses L-lysyl(4)-[histone H3] + 3 S-adenosyl-L-methionine = N(6),N(6),N(6)-trimethyl-L-lysyl(4)-[histone H3] + 3 S-adenosyl-L-homocysteine + 3 H(+). Histone methyltransferase that specifically trimethylates 'Lys-9' of histone H3. H3 'Lys-9' trimethylation represents a specific tag for epigenetic transcriptional repression by recruiting HP1 (CBX1, CBX3 and/or CBX5) proteins to methylated histones. Mainly functions in euchromatin regions, thereby playing a central role in the silencing of euchromatic genes. H3 'Lys-9' trimethylation is coordinated with DNA methylation. Plays a role in promoter hypermethylation and transcriptional silencing of tumor suppressor genes (TSGs) or other tumor-related genes. Also required to maintain a transcriptionally repressive state of genes in undifferentiated embryonic stem cells (ESCs). Associates at promoter regions of tumor suppressor genes (TSGs) leading to their gene silencing. In Danio rerio (Zebrafish), this protein is Histone-lysine N-methyltransferase SETDB1-B (setdb1b).